We begin with the raw amino-acid sequence, 220 residues long: Putative tyrosine-protein phosphatase 1 (220 aa).

The region spanning 67-218 (FKVPLNAELF…LLARKHVRGQ (152 aa)) is the Tyrosine-protein phosphatase domain.

Belongs to the protein-tyrosine phosphatase family. Non-receptor class CDC14 subfamily.

It catalyses the reaction O-phospho-L-tyrosyl-[protein] + H2O = L-tyrosyl-[protein] + phosphate. Could be inactive as the active site cysteine is modified to tryptophan. The protein is Putative tyrosine-protein phosphatase 1 (PTP-1) of Orgyia pseudotsugata multicapsid polyhedrosis virus (OpMNPV).